A 735-amino-acid chain; its full sequence is Dolichyl-diphosphooligosaccharide--protein glycosyltransferase subunit STT3B (735 aa).

Residues 1-38 (MGGKSEPAKSESMATKPDLLNTSFFSFKSLKLKTKQQE) lie on the Cytoplasmic side of the membrane. The chain crosses the membrane as a helical span at residues 39-59 (LLLRISILGLVYILAFIARLF). The Lumenal portion of the chain corresponds to 60–142 (SVLRYESMIH…VHIREVCVLT (83 aa)). A DXD motif 1 motif is present at residues 70–72 (EFD). Aspartate 72 is a binding site for Mn(2+). A helical membrane pass occupies residues 143-161 (APFFASNTTLVAYFFGKEL). Residues 162–163 (WD) are Cytoplasmic-facing. The chain crosses the membrane as a helical span at residues 164–181 (TGAGLVAAVLIAICPGYI). Topologically, residues 182–192 (SRSVAGSYDNE) are lumenal. Mn(2+)-binding residues include aspartate 190 and glutamate 192. Residues 190 to 192 (DNE) carry the DXD motif 2 motif. Residues 193–212 (AVAIFALLLTFYLFVKAVNT) form a helical membrane-spanning segment. At 213 to 214 (GS) the chain is on the cytoplasmic side. Residues 215-229 (LAWALASAFGYFYMV) form a helical membrane-spanning segment. Residues 230 to 234 (SAWGG) are Lumenal-facing. The chain crosses the membrane as a helical span at residues 235–251 (YVFIINLVPLYVLVLLI). Topologically, residues 252–256 (TGRYS) are cytoplasmic. The chain crosses the membrane as a helical span at residues 257–282 (MRLYIAYNCMYILGMLLAMQIRFVGF). Over 283–290 (QHVQSGEH) the chain is Lumenal. Residues 291–310 (MGAMGVFLLMQVFYFLDWVK) traverse the membrane as a helical segment. The Cytoplasmic segment spans residues 311 to 326 (YQLNDTKLFQTFLRIT). Residues 327-347 (VTSAILVGGVAVGVGTASGYI) form a helical membrane-spanning segment. Over 348–380 (SPWTGRFYSLLDPTYAKDHIPIIASVSEHQPTA) the chain is Lumenal. The short motif at 372 to 375 (SVSE) is the SVSE motif element. A helical transmembrane segment spans residues 381 to 403 (WSSFMFDYHILLFLFPAGLYFCF). At 404–409 (KRLTDA) the chain is on the cytoplasmic side. A helical transmembrane segment spans residues 410–426 (TIFIVMYGLTSLYFAGV). The Lumenal portion of the chain corresponds to 427–430 (MVRL). Arginine 429 lines the dolichyl diphosphooligosaccharide pocket. Residues 431-452 (ILVATPAVCLISAIAVSATIKN) traverse the membrane as a helical segment. Topologically, residues 453-494 (LTSLLRTKQKVSQTGSTKGAGSSKASSKVTLDQSQPFQKNGA) are cytoplasmic. A helical membrane pass occupies residues 495-515 (IALLVGVFYLLSRYAIHCTWV). Residues 516–735 (TAEAYSSPSI…YRVKPPTNRL (220 aa)) lie on the Lumenal side of the membrane. The interval 562–564 (WWD) is interacts with target acceptor peptide in protein substrate. The short motif at 562-566 (WWDYG) is the WWDYG motif element. Tyrosine 567 is a dolichyl diphosphooligosaccharide binding site. N-linked (GlcNAc...) asparagine glycans are attached at residues asparagine 574 and asparagine 581. N-linked (GlcNAc...) (high mannose) asparagine glycosylation occurs at asparagine 585. Positions 629-636 (DINKFLWM) match the DK motif motif.

The protein belongs to the STT3 family. In terms of assembly, component of the oligosaccharyltransferase (OST) complex. The cofactor is Mg(2+). Requires Mn(2+) as cofactor. In terms of tissue distribution, expressed preferentially in the root but also in the shoot.

It localises to the endoplasmic reticulum membrane. The catalysed reaction is a di-trans,poly-cis-dolichyl diphosphooligosaccharide + L-asparaginyl-[protein] = N(4)-(oligosaccharide-(1-&gt;4)-N-acetyl-beta-D-glucosaminyl-(1-&gt;4)-N-acetyl-beta-D-glucosaminyl)-L-asparaginyl-[protein] + a di-trans,poly-cis-dolichyl diphosphate + H(+). The protein operates within protein modification; protein glycosylation. In terms of biological role, catalytic subunit of the oligosaccharyl transferase (OST) complex that catalyzes the initial transfer of a defined glycan (Glc(3)Man(9)GlcNAc(2) in eukaryotes) from the lipid carrier dolichol-pyrophosphate to an asparagine residue within an Asn-X-Ser/Thr consensus motif in nascent polypeptide chains, the first step in protein N-glycosylation. N-glycosylation occurs cotranslationally and the complex associates with the Sec61 complex at the channel-forming translocon complex that mediates protein translocation across the endoplasmic reticulum (ER). All subunits are required for a maximal enzyme activity. This subunit contains the active site and the acceptor peptide and donor lipid-linked oligosaccharide (LLO) binding pockets. The polypeptide is Dolichyl-diphosphooligosaccharide--protein glycosyltransferase subunit STT3B (STT3B) (Arabidopsis thaliana (Mouse-ear cress)).